An 82-amino-acid polypeptide reads, in one-letter code: MSSSIFDKVQNIVANQLGVEKDKVTEDAKFAALGADSLDTVELVMAIEDAFSIDIPDEDAEKIANLSQAIEFIQHAIDKKKD.

The region spanning 3 to 77 (SSIFDKVQNI…QAIEFIQHAI (75 aa)) is the Carrier domain. At serine 37 the chain carries O-(pantetheine 4'-phosphoryl)serine.

It belongs to the acyl carrier protein (ACP) family. 4'-phosphopantetheine is transferred from CoA to a specific serine of apo-ACP by AcpS. This modification is essential for activity because fatty acids are bound in thioester linkage to the sulfhydryl of the prosthetic group.

It localises to the plastid. The protein localises to the chloroplast. It functions in the pathway lipid metabolism; fatty acid biosynthesis. Its function is as follows. Carrier of the growing fatty acid chain in fatty acid biosynthesis. This chain is Acyl carrier protein, found in Gracilaria tenuistipitata var. liui (Red alga).